Consider the following 540-residue polypeptide: 2,3-bisphosphoglycerate-independent phosphoglycerate mutase (540 aa).

The Mn(2+) site is built by D13 and S63. The active-site Phosphoserine intermediate is the S63. Substrate is bound by residues H124, 154–155, R186, R192, 262–265, and K356; these read RD and RPDR. Mn(2+) contacts are provided by D423, H427, D464, H465, and H483.

The protein belongs to the BPG-independent phosphoglycerate mutase family. Monomer. The cofactor is Mn(2+).

The catalysed reaction is (2R)-2-phosphoglycerate = (2R)-3-phosphoglycerate. The protein operates within carbohydrate degradation; glycolysis; pyruvate from D-glyceraldehyde 3-phosphate: step 3/5. Its function is as follows. Catalyzes the interconversion of 2-phosphoglycerate and 3-phosphoglycerate. This is 2,3-bisphosphoglycerate-independent phosphoglycerate mutase from Chloroflexus aurantiacus (strain ATCC 29366 / DSM 635 / J-10-fl).